The chain runs to 252 residues: NDR1/HIN1-like protein 6 (252 aa).

Residues 1 to 46 (MSQHQKIYPVQDPEAATARPTAPLVPRGSSRSEHGDPSKVPLNQRP) form a disordered region. A helical membrane pass occupies residues 70 to 90 (FCFLLLLVVAVGASIGILYLV). Asn121, Asn154, Asn166, and Asn180 each carry an N-linked (GlcNAc...) asparagine glycan.

In terms of assembly, homodimer. Highly expressed in seeds and at lower level in roots and senescing leaves. Expressed in leaves and flowers.

The protein resides in the cell membrane. Its subcellular location is the cytoplasm. It localises to the cytosol. Its function is as follows. Plays an important role in the abiotic stresses-induced abscisic acid (ABA) signaling and biosynthesis. Acts as a positive regulator of ABA-mediated seed germination inhibition. Functions downstream of ABF2/AREB1, ABF4/AREB2 and ABF3. The sequence is that of NDR1/HIN1-like protein 6 from Arabidopsis thaliana (Mouse-ear cress).